The sequence spans 630 residues: Arginine--tRNA ligase (630 aa).

Residues 120 to 130 carry the 'HIGH' region motif; sequence ANPVHPLHIGH.

Belongs to the class-I aminoacyl-tRNA synthetase family.

The protein localises to the cytoplasm. The enzyme catalyses tRNA(Arg) + L-arginine + ATP = L-arginyl-tRNA(Arg) + AMP + diphosphate. This chain is Arginine--tRNA ligase, found in Pyrobaculum aerophilum (strain ATCC 51768 / DSM 7523 / JCM 9630 / CIP 104966 / NBRC 100827 / IM2).